The chain runs to 670 residues: DNA-binding transcriptional activator HyfR (670 aa).

One can recognise a GAF domain in the interval 169–311 (DLDDLIADVA…HIADRIAIAV (143 aa)). The Cys-rich segment, might bind a metal cluster signature appears at 207–221 (CSDLSASHCACLPRC). Positions 347 to 576 (IIYQSQAMED…LENVIERAVL (230 aa)) constitute a Sigma-54 factor interaction domain. ATP is bound by residues 375-382 (GETGTGKE) and 438-447 (ADGGTLFLDE). The H-T-H motif DNA-binding region spans 641–660 (PRGAATRLGMKRTTLLSRMQ).

Functionally, a transcriptional activator of its own operon; when overexpressed operon expression is strongly enhanced by low pH (under pH 6.0), strongly inhibited by O(2) but only weakly stimulated by fumarate. Expression in situ is very weak. The polypeptide is DNA-binding transcriptional activator HyfR (Escherichia coli (strain K12)).